The chain runs to 175 residues: Lactobacillus up-regulated protein (175 aa).

A signal peptide spans 1–18 (MRSIFLAVLGLMATSSLA). Asparagine 59 is a glycosylation site (N-linked (GlcNAc...) asparagine).

This is Lactobacillus up-regulated protein (lbuA) from Emericella nidulans (strain FGSC A4 / ATCC 38163 / CBS 112.46 / NRRL 194 / M139) (Aspergillus nidulans).